A 734-amino-acid polypeptide reads, in one-letter code: Adhesion G protein-coupled receptor E5 (734 aa).

A signal peptide spans 1-26 (MGGPHGGPFLLFHVLCFLLTLSEVGS). Over 27 to 449 (QNSKACALPC…VEDPKLALIT (423 aa)) the chain is Extracellular. Residues 28–70 (NSKACALPCPPNSSCVNGTACRCAPGFISFSGEIFTDPLESCD) form the EGF-like 1 domain. Cystine bridges form between Cys32/Cys42, Cys36/Cys48, Cys50/Cys69, Cys75/Cys89, Cys83/Cys98, Cys100/Cys121, Cys127/Cys140, Cys134/Cys149, and Cys151/Cys170. N-linked (GlcNAc...) asparagine glycans are attached at residues Asn39 and Asn44. Residues 71–122 (DINECGPPSPVDCGSSADCQNTEGGYYCTCSPGYEPVSGAMIFRNESENTCR) form the EGF-like 2; calcium-binding domain. Residues Asn115 and Asn136 are each glycosylated (N-linked (GlcNAc...) asparagine). In terms of domain architecture, EGF-like 3; calcium-binding spans 123 to 171 (DVDECSSGQHQCHNSTVCFNTVGSYTCHCREGWEPKHGLKNKQKDTICK). The region spanning 265-441 (TYRSLDNTEL…AILMAHYDVE (177 aa)) is the GAIN-B domain. Residues Asn285, Asn327, Asn372, Asn403, and Asn418 are each glycosylated (N-linked (GlcNAc...) asparagine). 2 cysteine pairs are disulfide-bonded: Cys393-Cys423 and Cys411-Cys425. The interval 393–441 (CAFWKKDSNGNGSWATTGCWKMGRGNGSITCQCSHLSSFAILMAHYDVE) is GPS. Residues 450–470 (KVGLALSLACLLLCILTFLLV) form a helical membrane-spanning segment. Residues 471-478 (RPIQGSRT) lie on the Cytoplasmic side of the membrane. Residues 479-499 (TVHLHLCICLFVGSAIFLAGI) form a helical membrane-spanning segment. Topologically, residues 500–519 (ENEGGEVGTRCRLVAVLLHY) are extracellular. The helical transmembrane segment at 520–540 (CFLAAFCWMSLEGVELYFLVV) threads the bilayer. Topologically, residues 541–550 (RVFQGQGMRK) are cytoplasmic. A helical transmembrane segment spans residues 551–571 (LWLCLIGYGVPLIIVGISAGA). Topologically, residues 572 to 593 (YSKGYGREKFCWLNFEGGFLWS) are extracellular. The chain crosses the membrane as a helical span at residues 594–614 (FVGPVTFIVLGNAIIFVITVW). Residues 615–637 (KLTQKFSEINPDIKKLKKARVLT) lie on the Cytoplasmic side of the membrane. The chain crosses the membrane as a helical span at residues 638–658 (ITAIAQLFVLGCTWVFGLLLF). Topologically, residues 659–662 (NPES) are extracellular. A helical membrane pass occupies residues 663–683 (WVLSYIFSILNCLQGFFLFVL). Topologically, residues 684-734 (YCLLNKKVREEYRKWACMVAGNKYSEFATTTSGSGSSHNQTQALRPSESGM) are cytoplasmic. Residues 712-734 (TTTSGSGSSHNQTQALRPSESGM) are disordered. Thr713 carries the post-translational modification Phosphothreonine. Ser715 carries the post-translational modification Phosphoserine. At Thr724 the chain carries Phosphothreonine. 2 positions are modified to phosphoserine: Ser730 and Ser732.

Belongs to the G-protein coupled receptor 2 family. LN-TM7 subfamily. In terms of assembly, forms a heterodimer, consisting of a large extracellular region (alpha subunit) non-covalently linked to a seven-transmembrane moiety (beta subunit). Interacts with complement decay-accelerating factor (DAF) and with chondroitin sulfate. In terms of processing, proteolytically cleaved into 2 subunits, an extracellular alpha subunit and a seven-transmembrane subunit.

It is found in the cell membrane. It localises to the secreted. Its subcellular location is the extracellular space. Its function is as follows. Receptor potentially involved in both adhesion and signaling processes early after leukocyte activation. Plays an essential role in leukocyte migration. This is Adhesion G protein-coupled receptor E5 from Bos taurus (Bovine).